Reading from the N-terminus, the 167-residue chain is Transmembrane protein 220 (167 aa).

5 helical membrane-spanning segments follow: residues 10–30 (PGLW…AAVV), 40–60 (WVVV…NPLV), 69–89 (VSAI…YHFL), 104–122 (ELSG…HSSS), and 130–150 (MHLA…VYVH).

It is found in the membrane. In Mus musculus (Mouse), this protein is Transmembrane protein 220 (Tmem220).